Consider the following 401-residue polypeptide: MSPAHGNRLGTPESPNATTLLLLGSGELGKEVVLAAQRLGIETVAVDRYEHAPAMQVAHRDYIIDMTDATALREVVQQEDPTIIIPEIEAIATDELKRLETQGYDVVPTAQATRLTMDREWIREFAAEEVGVTTNEYAFADNYDTYRKAVEDIGIPVVVKPTMSSSGKGQSIVRESAEINGAWETARAGSRSDTGRVIIEELVEFDSEFTLLTVRHADGTTFCPPVGHTQQDGDYRTSWQPHSLTTEQRTTAQQMAQKVTDGLGGYGIFGVEFFVQDGTVIFSELSPRPHDTGLVTLSSQRLSQFDLHLRAILGLPIPDIDVERPGASAALVVDEPLTRPAFTGVDEALSMSDVDIRLFGKPEAYPGRRMGAAVATAIDIETAQERASEAVDCIHVSDDKT.

N(1)-(5-phospho-beta-D-ribosyl)glycinamide is bound by residues 27 to 28 and glutamate 87; that span reads EL. Residues arginine 119, lysine 160, 165–170, 200–203, and glutamate 208 contribute to the ATP site; these read SSGKGQ and EELV. Residues 124-313 enclose the ATP-grasp domain; sequence EFAAEEVGVT…QFDLHLRAIL (190 aa). 2 residues coordinate Mg(2+): glutamate 272 and glutamate 284. N(1)-(5-phospho-beta-D-ribosyl)glycinamide contacts are provided by residues aspartate 291, lysine 361, and 368-369; that span reads RR.

It belongs to the PurK/PurT family. Homodimer.

It carries out the reaction N(1)-(5-phospho-beta-D-ribosyl)glycinamide + formate + ATP = N(2)-formyl-N(1)-(5-phospho-beta-D-ribosyl)glycinamide + ADP + phosphate + H(+). The protein operates within purine metabolism; IMP biosynthesis via de novo pathway; N(2)-formyl-N(1)-(5-phospho-D-ribosyl)glycinamide from N(1)-(5-phospho-D-ribosyl)glycinamide (formate route): step 1/1. Its function is as follows. Involved in the de novo purine biosynthesis. Catalyzes the transfer of formate to 5-phospho-ribosyl-glycinamide (GAR), producing 5-phospho-ribosyl-N-formylglycinamide (FGAR). Formate is provided by PurU via hydrolysis of 10-formyl-tetrahydrofolate. In Haloquadratum walsbyi (strain DSM 16790 / HBSQ001), this protein is Formate-dependent phosphoribosylglycinamide formyltransferase.